Here is a 465-residue protein sequence, read N- to C-terminus: Alpha-galacturonidase (465 aa).

I11 to T78 lines the NAD(+) pocket. N157 provides a ligand contact to substrate. C179 is a Mn(2+) binding site. Catalysis depends on H180, which acts as the Proton donor. Residue H216 participates in Mn(2+) binding.

It belongs to the glycosyl hydrolase 4 family. In terms of assembly, homotetramer. NAD(+) is required as a cofactor. The cofactor is Mn(2+).

The catalysed reaction is [(1-&gt;4)-alpha-D-galacturonosyl](n) + H2O = alpha-D-galacturonate + [(1-&gt;4)-alpha-D-galacturonosyl](n-1). Functionally, alpha-galacturonidase able to catalyze the hydrolysis of the chromogenic substrate p-nitrophenyl-alpha-D-galacturonic acid (pNPalphaGalUA). It is probable that alpha-1,4-di-galacturonate (GalUA(2)) is the naturally occurring substrate. This Thermoanaerobacterium saccharolyticum (strain DSM 8691 / JW/SL-YS485) protein is Alpha-galacturonidase.